A 265-amino-acid chain; its full sequence is Undecaprenyl-diphosphatase (265 aa).

A run of 8 helical transmembrane segments spans residues 19–39 (FLPV…GFTG), 42–62 (ADSF…CLYW), 80–100 (IRGL…GLVA), 108–128 (LFNP…IFLV), 143–163 (MTPG…WPGF), 181–201 (SLAA…ATLY), 220–240 (IGFV…IVLV), and 243–263 (ITLR…FFFW).

This sequence belongs to the UppP family.

The protein resides in the cell inner membrane. The enzyme catalyses di-trans,octa-cis-undecaprenyl diphosphate + H2O = di-trans,octa-cis-undecaprenyl phosphate + phosphate + H(+). Catalyzes the dephosphorylation of undecaprenyl diphosphate (UPP). Confers resistance to bacitracin. This chain is Undecaprenyl-diphosphatase, found in Solidesulfovibrio magneticus (strain ATCC 700980 / DSM 13731 / RS-1) (Desulfovibrio magneticus).